The following is a 1391-amino-acid chain: Eukaryotic translation initiation factor 3 subunit A (1391 aa).

In terms of domain architecture, PCI spans 315–498 (MQRMSTRVLL…RTLSFGSDLN (184 aa)). 6 stretches are compositionally biased toward basic and acidic residues: residues 809–921 (DKEE…RGGP), 940–959 (AALRKDEEQVSSRAFEEKVS), 966–1234 (EKGG…RDQT), 1246–1257 (GWREREKAREDS), 1265–1307 (QAPE…ETPR), and 1313–1380 (DSDR…IKPE). Residues 809–1391 (DKEEEEERLR…DEDGWTTVRR (583 aa)) are disordered. Repeat copies occupy residues 973–982 (DEDRGPKRGL) and 983–992 (EEDRGPRRGI). The segment at 973 to 1229 (DEDRGPKRGL…DDDRGPRRGE (257 aa)) is 26 X 10 AA approximate tandem repeats of [DE]-[DE]-[DE]-R-[GATV]-[PS]-[KRW]-R-G-[AEFGIL]. One copy of the 3; approximate repeat lies at 993–1001 (DDAGPRRGF). 20 consecutive repeat copies span residues 1002–1011 (EEDRGPRRGI), 1012–1021 (EDDRAPRRGF), 1022–1031 (DDDRGPRRGF), 1032–1041 (DDDRGPRRGF), 1042–1051 (DEDRGPRRGI), 1052–1061 (DDDRGPRRGF), 1062–1071 (DEDRTPRRGF), 1072–1081 (DDDRGPRRGF), 1082–1091 (DDDRGPRRGF), 1092–1101 (DEDRGPRRGF), 1102–1111 (EDDRGPRRGF), 1112–1120 (EDDRGPRRG), 1122–1131 (EDDRGPRRGF), 1132–1141 (EDDRGPRRGF), 1142–1151 (EDDRGPRRGF), 1152–1161 (DEDRGPRRGF), 1162–1171 (EDDRGPRRGF), 1172–1181 (DEDRTPRRGF), 1182–1191 (DDDRGPRRGL), and 1192–1201 (DEDRGSWRGG). The 24; approximate repeat unit spans residues 1202–1209 (DDVPRRGA). Repeat copies occupy residues 1210-1219 (DDDRGPRRGA) and 1220-1229 (DDDRGPRRGE).

This sequence belongs to the eIF-3 subunit A family. In terms of assembly, component of the eukaryotic translation initiation factor 3 (eIF-3) complex, which is composed of 13 subunits: eif3a, eif3b, eif3c, eif3d, eif3e, eif3f, eif3g, eif3h, eif3i, eif3j, eif3k, eif3l and eif3m.

It localises to the cytoplasm. In terms of biological role, RNA-binding component of the eukaryotic translation initiation factor 3 (eIF-3) complex, which is involved in protein synthesis of a specialized repertoire of mRNAs and, together with other initiation factors, stimulates binding of mRNA and methionyl-tRNAi to the 40S ribosome. The eIF-3 complex specifically targets and initiates translation of a subset of mRNAs involved in cell proliferation. This chain is Eukaryotic translation initiation factor 3 subunit A (eif3a), found in Xenopus tropicalis (Western clawed frog).